We begin with the raw amino-acid sequence, 1347 residues long: Protocadherin-11 X-linked (1347 aa).

The N-terminal stretch at 1–23 is a signal peptide; it reads MDLLSGTYIFAVLLACVVFHSGA. The Extracellular portion of the chain corresponds to 24-812; that stretch reads QEKNYTIREE…VSSPTNDYVK (789 aa). 7 consecutive Cadherin domains span residues 26–139, 140–249, 250–355, 362–466, 467–570, 571–673, and 677–795; these read KNYT…APLF, PATV…HPVF, KETE…VPSI, NPVN…APVF, TQSF…SPVF, THNE…KPVF, and PSNY…APVT. Asn27, Asn48, and Asn54 each carry an N-linked (GlcNAc...) asparagine glycan. Asn344 carries N-linked (GlcNAc...) asparagine glycosylation. Residue Asn553 is glycosylated (N-linked (GlcNAc...) asparagine). An N-linked (GlcNAc...) asparagine glycan is attached at Asn773. Residues 813–833 form a helical membrane-spanning segment; the sequence is ILVAAVAGTITVVVVIFITAV. Residues 834-1347 lie on the Cytoplasmic side of the membrane; sequence VRCRQAPHLK…DSPIMEEHPL (514 aa). Disordered regions lie at residues 1057-1091, 1097-1116, and 1326-1347; these read LPEG…GYPQ, RATP…ESTF, and FTPR…EHPL.

Its subcellular location is the cell membrane. Potential calcium-dependent cell-adhesion protein. The protein is Protocadherin-11 X-linked (PCDH11X) of Gorilla gorilla gorilla (Western lowland gorilla).